We begin with the raw amino-acid sequence, 186 residues long: UPF0301 protein Tgr7_2910 (186 aa).

The protein belongs to the UPF0301 (AlgH) family.

This is UPF0301 protein Tgr7_2910 from Thioalkalivibrio sulfidiphilus (strain HL-EbGR7).